An 844-amino-acid polypeptide reads, in one-letter code: E3 ubiquitin-protein ligase BRE1-like 2 (844 aa).

Coiled coils occupy residues 1–38 (MDAAALQYENQKLVQQLEAQKSKMRALEGKFKELRDEQ) and 160–240 (EDVI…QLQT). Residues 244 to 269 (SLMNTSAPNGVNGSVSTDKSSDKGMG) form a disordered region. Polar residues predominate over residues 245–261 (LMNTSAPNGVNGSVSTD). Coiled coils occupy residues 290 to 604 (ELHE…SEIE) and 640 to 670 (KMKQAYGSLLAEKNMLQKQLQHVNSSLESSK). The segment at 792-831 (CGVCFDRPKEVVITKCFHLFCSPCIQRNLEIRHRKCPGCG) adopts an RING-type zinc-finger fold.

The protein belongs to the BRE1 family.

Its subcellular location is the nucleus. It catalyses the reaction S-ubiquitinyl-[E2 ubiquitin-conjugating enzyme]-L-cysteine + [acceptor protein]-L-lysine = [E2 ubiquitin-conjugating enzyme]-L-cysteine + N(6)-ubiquitinyl-[acceptor protein]-L-lysine.. Its pathway is protein modification; protein ubiquitination. Functionally, E3 ubiquitin-protein ligase that monoubiquitinates H2B to form H2BK143ub1. H2BK143ub1 gives a specific tag for epigenetic transcriptional activation and is also prerequisite for H3K4me and maybe H3K79me. It thereby plays a central role in histone code and gene regulation. Forms a ubiquitin ligase complex in cooperation with the E2 enzyme UBC2/RAD6. The sequence is that of E3 ubiquitin-protein ligase BRE1-like 2 (BRE1B) from Oryza sativa subsp. indica (Rice).